Here is a 591-residue protein sequence, read N- to C-terminus: L-fucose isomerase (591 aa).

Catalysis depends on proton acceptor residues glutamate 337 and aspartate 361. Mn(2+)-binding residues include glutamate 337, aspartate 361, and histidine 528.

The protein belongs to the L-fucose isomerase family. As to quaternary structure, homohexamer. The cofactor is Mn(2+).

The protein localises to the cytoplasm. The catalysed reaction is L-fucose = L-fuculose. It functions in the pathway carbohydrate degradation; L-fucose degradation; L-lactaldehyde and glycerone phosphate from L-fucose: step 1/3. Its function is as follows. Converts the aldose L-fucose into the corresponding ketose L-fuculose. This chain is L-fucose isomerase, found in Escherichia coli O17:K52:H18 (strain UMN026 / ExPEC).